Consider the following 332-residue polypeptide: MASTDFKDYYQILGVTKTASEAEIKKQFRKLALKYHPDKNPGDKAAEEKFKEISEAYEVLSDPEKRQKYDQFGRYWQQAGTAGQPSGSYGPGVGVDFGGFDFSQYGNFDEFINELLGRFNTPGGGGQRTSYSYSTGGPGFNDFGGFGNAQAPAGDREATLQLTLAEAFRGVEKRLNLGEEMVTVRIPAGAKNGSRVRVRGKGMASPYGQRGDLYLNLQLTPHPFFQFEGDNLVCELAIAPDEAVLGADISVPTPDGMVRMKVPAGVKSGQSLRLKGKGWPNPKQGRGDQLVRLIITAPKNPSAIERECYEKIQAQRTENPRQAVEKYANLLA.

One can recognise a J domain in the interval 6–75 (FKDYYQILGV…RQKYDQFGRY (70 aa)).

The sequence is that of DnAJ-like protein slr0093 from Synechocystis sp. (strain ATCC 27184 / PCC 6803 / Kazusa).